Here is a 404-residue protein sequence, read N- to C-terminus: Argininosuccinate synthase (404 aa).

ATP contacts are provided by residues 13–21 (AYSGGLDTS) and A41. L-citrulline contacts are provided by Y93 and S98. Position 123 (G123) interacts with ATP. Positions 125, 129, and 130 each coordinate L-aspartate. Position 129 (N129) interacts with L-citrulline. Residues R133, S182, S191, E267, and Y279 each coordinate L-citrulline.

The protein belongs to the argininosuccinate synthase family. Type 1 subfamily. Homotetramer.

The protein resides in the cytoplasm. The enzyme catalyses L-citrulline + L-aspartate + ATP = 2-(N(omega)-L-arginino)succinate + AMP + diphosphate + H(+). It functions in the pathway amino-acid biosynthesis; L-arginine biosynthesis; L-arginine from L-ornithine and carbamoyl phosphate: step 2/3. This Moritella profunda protein is Argininosuccinate synthase.